A 518-amino-acid polypeptide reads, in one-letter code: uncharacterized protein (518 aa).

2 ABC transporter domains span residues Leu-4–Ala-260 and Leu-324–Leu-518. ATP contacts are provided by residues Gly-36–Ser-43 and Gly-357–Thr-364.

It belongs to the ABC transporter superfamily.

This is an uncharacterized protein from Bacillus subtilis (strain 168).